A 246-amino-acid chain; its full sequence is Endonuclease NucS (246 aa).

It belongs to the NucS endonuclease family.

The protein localises to the cytoplasm. Its function is as follows. Cleaves both 3' and 5' ssDNA extremities of branched DNA structures. The sequence is that of Endonuclease NucS from Corynebacterium urealyticum (strain ATCC 43042 / DSM 7109).